Here is a 223-residue protein sequence, read N- to C-terminus: Deoxyribose-phosphate aldolase (223 aa).

Asp-91 (proton donor/acceptor) is an active-site residue. The active-site Schiff-base intermediate with acetaldehyde is Lys-154. The active-site Proton donor/acceptor is the Lys-183.

Belongs to the DeoC/FbaB aldolase family. DeoC type 1 subfamily.

The protein localises to the cytoplasm. It catalyses the reaction 2-deoxy-D-ribose 5-phosphate = D-glyceraldehyde 3-phosphate + acetaldehyde. The protein operates within carbohydrate degradation; 2-deoxy-D-ribose 1-phosphate degradation; D-glyceraldehyde 3-phosphate and acetaldehyde from 2-deoxy-alpha-D-ribose 1-phosphate: step 2/2. Functionally, catalyzes a reversible aldol reaction between acetaldehyde and D-glyceraldehyde 3-phosphate to generate 2-deoxy-D-ribose 5-phosphate. This chain is Deoxyribose-phosphate aldolase, found in Lysinibacillus sphaericus (strain C3-41).